The sequence spans 375 residues: Glutamate 5-kinase (375 aa).

Lys-17 provides a ligand contact to ATP. Residues Ser-57, Asp-144, and Asn-156 each coordinate substrate. 176–177 (TD) contributes to the ATP binding site. The region spanning 283–361 (KGELILDTGA…DEIEGILGYV (79 aa)) is the PUA domain.

The protein belongs to the glutamate 5-kinase family.

Its subcellular location is the cytoplasm. The enzyme catalyses L-glutamate + ATP = L-glutamyl 5-phosphate + ADP. It participates in amino-acid biosynthesis; L-proline biosynthesis; L-glutamate 5-semialdehyde from L-glutamate: step 1/2. In terms of biological role, catalyzes the transfer of a phosphate group to glutamate to form L-glutamate 5-phosphate. The polypeptide is Glutamate 5-kinase (Thioalkalivibrio sulfidiphilus (strain HL-EbGR7)).